The following is a 217-amino-acid chain: Pyridoxine/pyridoxamine 5'-phosphate oxidase (217 aa).

Substrate-binding positions include 13 to 16 and Lys71; that span reads RREY. FMN-binding positions include 66 to 71, 81 to 82, Arg87, Lys88, and Gln110; these read RTVLLK and YT. Substrate contacts are provided by Tyr128, Arg132, and Ser136. FMN is bound by residues 145-146 and Trp190; that span reads QS. 196–198 lines the substrate pocket; it reads RLH. Arg200 provides a ligand contact to FMN.

This sequence belongs to the pyridoxamine 5'-phosphate oxidase family. In terms of assembly, homodimer. FMN serves as cofactor.

It catalyses the reaction pyridoxamine 5'-phosphate + O2 + H2O = pyridoxal 5'-phosphate + H2O2 + NH4(+). The catalysed reaction is pyridoxine 5'-phosphate + O2 = pyridoxal 5'-phosphate + H2O2. The protein operates within cofactor metabolism; pyridoxal 5'-phosphate salvage; pyridoxal 5'-phosphate from pyridoxamine 5'-phosphate: step 1/1. It functions in the pathway cofactor metabolism; pyridoxal 5'-phosphate salvage; pyridoxal 5'-phosphate from pyridoxine 5'-phosphate: step 1/1. Its function is as follows. Catalyzes the oxidation of either pyridoxine 5'-phosphate (PNP) or pyridoxamine 5'-phosphate (PMP) into pyridoxal 5'-phosphate (PLP). In Rubrobacter xylanophilus (strain DSM 9941 / JCM 11954 / NBRC 16129 / PRD-1), this protein is Pyridoxine/pyridoxamine 5'-phosphate oxidase.